The sequence spans 323 residues: Coiled-coil domain-containing protein 160 (323 aa).

The tract at residues 1–81 (MDARRKHWKD…EGEQDSNLRE (81 aa)) is disordered. The span at 48–58 (SNFSVRNTQEG) shows a compositional bias: polar residues. Residues 144–289 (LRLHLLNEEL…IKNELRVEKT (146 aa)) adopt a coiled-coil conformation.

Belongs to the CCDC160 family.

This chain is Coiled-coil domain-containing protein 160 (Ccdc160), found in Mus musculus (Mouse).